We begin with the raw amino-acid sequence, 306 residues long: Putative lipid kinase Sca_1050 (306 aa).

Residues 3–139 (QHFHRGILFY…FDVLKVNDTY (137 aa)) enclose the DAGKc domain. ATP is bound by residues Ser-44, 74–80 (GDGTVNE), and Thr-101. Ser-220, Asp-223, and Glu-225 together coordinate Mg(2+). Residue Glu-281 is the Proton acceptor of the active site.

It belongs to the diacylglycerol/lipid kinase family. Mg(2+) serves as cofactor.

Its function is as follows. May catalyze the ATP-dependent phosphorylation of lipids other than diacylglycerol (DAG). The sequence is that of Putative lipid kinase Sca_1050 from Staphylococcus carnosus (strain TM300).